The sequence spans 279 residues: Prepilin leader peptidase/N-methyltransferase (279 aa).

Residues 1 to 16 (MDDLREFAQLFPAWWF) lie on the Periplasmic side of the membrane. Residues 17-35 (GALGVLGLIVGSFLNVVIY) form a helical membrane-spanning segment. At 36 to 104 (RLPIMLERRW…RSRCCHQSVS (69 aa)) the chain is on the cytoplasmic side. A helical membrane pass occupies residues 105 to 123 (VQYPLVEVITMLAFLAAGL). The Periplasmic segment spans residues 124-130 (LWLPGMA). Residues 131 to 149 (LWGALILLSFLLVLTVIDI) traverse the membrane as a helical segment. Residues 150–163 (KTLLLPDELTLSLL) lie on the Cytoplasmic side of the membrane. Residues 164-182 (WMGLLFNLSGTFVSLNDAV) traverse the membrane as a helical segment. The Periplasmic portion of the chain corresponds to 183 to 185 (VGA). The helical transmembrane segment at 186–204 (MAGYLSLWLLYWAFKYATG) threads the bilayer. The Cytoplasmic segment spans residues 205 to 214 (KEALGYGDFK). Residues 215–233 (LLAALGAWLGWQALPNLVL) traverse the membrane as a helical segment. Residues 234-236 (VAA) lie on the Periplasmic side of the membrane. Residues 237–254 (LSGLVVTLIWRGLRKEDT) traverse the membrane as a helical segment. The Cytoplasmic portion of the chain corresponds to 255–257 (AKP). The chain crosses the membrane as a helical span at residues 258-276 (LAFGPWLAIGGVFGMIMNG). At 277–279 (FNL) the chain is on the periplasmic side.

This sequence belongs to the peptidase A24 family.

The protein resides in the cell inner membrane. It carries out the reaction Typically cleaves a -Gly-|-Phe- bond to release an N-terminal, basic peptide of 5-8 residues from type IV prepilin, and then N-methylates the new N-terminal amino group, the methyl donor being S-adenosyl-L-methionine.. Functionally, plays a role in type II pseudopili formation by proteolytically removing the leader sequence from substrate proteins and subsequently monomethylating the alpha-amino group of the newly exposed N-terminal phenylalanine. Substrates include proteins required for biogenesis of the type II general secretory apparatus. The chain is Prepilin leader peptidase/N-methyltransferase (outO) from Pectobacterium carotovorum subsp. carotovorum (Erwinia carotovora subsp. carotovora).